Reading from the N-terminus, the 309-residue chain is Small ribosomal subunit protein uS7m (309 aa).

The segment at 39 to 86 (DSTTSSRLPPRVQIQQQQQQRTQPYSTETTPPPNSNNGDLAGIEGQPP) is disordered. Residues 51–61 (QIQQQQQQRTQ) show a composition bias toward low complexity.

The protein belongs to the universal ribosomal protein uS7 family. As to quaternary structure, component of the mitochondrial small ribosomal subunit (mt-SSU). Mature N.crassa 74S mitochondrial ribosomes consist of a small (37S) and a large (54S) subunit. The 37S small subunit contains a 16S ribosomal RNA (16S mt-rRNA) and 32 different proteins. The 54S large subunit contains a 23S rRNA (23S mt-rRNA) and 42 different proteins.

The protein localises to the mitochondrion. In terms of biological role, component of the mitochondrial ribosome (mitoribosome), a dedicated translation machinery responsible for the synthesis of mitochondrial genome-encoded proteins, including at least some of the essential transmembrane subunits of the mitochondrial respiratory chain. The mitoribosomes are attached to the mitochondrial inner membrane and translation products are cotranslationally integrated into the membrane. The protein is Small ribosomal subunit protein uS7m (rsm7) of Neurospora crassa (strain ATCC 24698 / 74-OR23-1A / CBS 708.71 / DSM 1257 / FGSC 987).